The primary structure comprises 101 residues: Protein Tat (101 aa).

An interaction with human CREBBP region spans residues 1–24 (MDPVDPKLEPWNHPGSQPTTPCNK). Residues 1-48 (MDPVDPKLEPWNHPGSQPTTPCNKCYCKVCCWHCQVCFLNKGLGISYG) are transactivation. Zn(2+) contacts are provided by Cys-22, Cys-25, and Cys-27. Positions 22-37 (CNKCYCKVCCWHCQVC) are cysteine-rich. An N6-acetyllysine; by host PCAF modification is found at Lys-28. Residues Cys-30, His-33, Cys-34, and Cys-37 each coordinate Zn(2+). Residues 38-48 (FLNKGLGISYG) are core. The disordered stretch occupies residues 48 to 101 (GRKKRRPRRGTPQGSKDHQNPVPKQPLPITSGNPTGSEKPKKEVASKTETDPLD). Residues 49 to 57 (RKKRRPRRG) carry the Nuclear localization signal, RNA-binding (TAR), and protein transduction motif. The interval 49 to 86 (RKKRRPRRGTPQGSKDHQNPVPKQPLPITSGNPTGSEK) is interaction with the host capping enzyme RNGTT. N6-acetyllysine; by host EP300 and GCN5L2 occurs at positions 50 and 51. 2 positions are modified to asymmetric dimethylarginine; by host PRMT6: Arg-52 and Arg-53. Residue Lys-71 forms a Glycyl lysine isopeptide (Lys-Gly) (interchain with G-Cter in ubiquitin) linkage. Basic and acidic residues predominate over residues 85-101 (EKPKKEVASKTETDPLD).

Belongs to the lentiviruses Tat family. As to quaternary structure, interacts with host CCNT1. Associates with the P-TEFb complex composed at least of Tat, P-TEFb (CDK9 and CCNT1), TAR RNA, RNA Pol II. Recruits the HATs CREBBP, TAF1/TFIID, EP300, PCAF and GCN5L2. Interacts with host KAT5/Tip60; this interaction targets the latter to degradation. Interacts with the host deacetylase SIRT1. Interacts with host capping enzyme RNGTT; this interaction stimulates RNGTT. Binds to host KDR, and to the host integrins ITGAV/ITGB3 and ITGA5/ITGB1. Interacts with host KPNB1/importin beta-1 without previous binding to KPNA1/importin alpha-1. Interacts with EIF2AK2. Interacts with host nucleosome assembly protein NAP1L1; this interaction may be required for the transport of Tat within the nucleus, since the two proteins interact at the nuclear rim. Interacts with host C1QBP/SF2P32; this interaction involves lysine-acetylated Tat. Interacts with the host chemokine receptors CCR2, CCR3 and CXCR4. Interacts with host DPP4/CD26; this interaction may trigger an anti-proliferative effect. Interacts with host LDLR. Interacts with the host extracellular matrix metalloproteinase MMP1. Interacts with host PRMT6; this interaction mediates Tat's methylation. Interacts with, and is ubiquitinated by MDM2/Hdm2. Interacts with host PSMC3 and HTATIP2. Interacts with STAB1; this interaction may overcome SATB1-mediated repression of IL2 and IL2RA (interleukin) in T cells by binding to the same domain than HDAC1. Interacts (when acetylated) with human CDK13, thereby increasing HIV-1 mRNA splicing and promoting the production of the doubly spliced HIV-1 protein Nef. Interacts with host TBP; this interaction modulates the activity of transcriptional pre-initiation complex. Interacts with host RELA. Interacts with host PLSCR1; this interaction negatively regulates Tat transactivation activity by altering its subcellular distribution. Asymmetrical arginine methylation by host PRMT6 seems to diminish the transactivation capacity of Tat and affects the interaction with host CCNT1. Post-translationally, acetylation by EP300, CREBBP, GCN5L2/GCN5 and PCAF regulates the transactivation activity of Tat. EP300-mediated acetylation of Lys-50 promotes dissociation of Tat from the TAR RNA through the competitive binding to PCAF's bromodomain. In addition, the non-acetylated Tat's N-terminus can also interact with PCAF. PCAF-mediated acetylation of Lys-28 enhances Tat's binding to CCNT1. Lys-50 is deacetylated by SIRT1. In terms of processing, polyubiquitination by host MDM2 does not target Tat to degradation, but activates its transactivation function and fosters interaction with CCNT1 and TAR RNA. Phosphorylated by EIF2AK2 on serine and threonine residues adjacent to the basic region important for TAR RNA binding and function. Phosphorylation of Tat by EIF2AK2 is dependent on the prior activation of EIF2AK2 by dsRNA.

The protein resides in the host nucleus. Its subcellular location is the host nucleolus. The protein localises to the host cytoplasm. It localises to the secreted. In terms of biological role, transcriptional activator that increases RNA Pol II processivity, thereby increasing the level of full-length viral transcripts. Recognizes a hairpin structure at the 5'-LTR of the nascent viral mRNAs referred to as the transactivation responsive RNA element (TAR) and recruits the cyclin T1-CDK9 complex (P-TEFb complex) that will in turn hyperphosphorylate the RNA polymerase II to allow efficient elongation. The CDK9 component of P-TEFb and other Tat-activated kinases hyperphosphorylate the C-terminus of RNA Pol II that becomes stabilized and much more processive. Other factors such as HTATSF1/Tat-SF1, SUPT5H/SPT5, and HTATIP2 are also important for Tat's function. Besides its effect on RNA Pol II processivity, Tat induces chromatin remodeling of proviral genes by recruiting the histone acetyltransferases (HATs) CREBBP, EP300 and PCAF to the chromatin. This also contributes to the increase in proviral transcription rate, especially when the provirus integrates in transcriptionally silent region of the host genome. To ensure maximal activation of the LTR, Tat mediates nuclear translocation of NF-kappa-B by interacting with host RELA. Through its interaction with host TBP, Tat may also modulate transcription initiation. Tat can reactivate a latently infected cell by penetrating in it and transactivating its LTR promoter. In the cytoplasm, Tat is thought to act as a translational activator of HIV-1 mRNAs. Extracellular circulating Tat can be endocytosed by surrounding uninfected cells via the binding to several surface receptors such as CD26, CXCR4, heparan sulfate proteoglycans (HSPG) or LDLR. Neurons are rarely infected, but they internalize Tat via their LDLR. Through its interaction with nuclear HATs, Tat is potentially able to control the acetylation-dependent cellular gene expression. Modulates the expression of many cellular genes involved in cell survival, proliferation or in coding for cytokines or cytokine receptors. Tat plays a role in T-cell and neurons apoptosis. Tat induced neurotoxicity and apoptosis probably contribute to neuroAIDS. Circulating Tat also acts as a chemokine-like and/or growth factor-like molecule that binds to specific receptors on the surface of the cells, affecting many cellular pathways. In the vascular system, Tat binds to ITGAV/ITGB3 and ITGA5/ITGB1 integrins dimers at the surface of endothelial cells and competes with bFGF for heparin-binding sites, leading to an excess of soluble bFGF. The polypeptide is Protein Tat (Homo sapiens (Human)).